The primary structure comprises 1342 residues: DNA-directed RNA polymerase subunit beta (1342 aa).

Belongs to the RNA polymerase beta chain family. As to quaternary structure, the RNAP catalytic core consists of 2 alpha, 1 beta, 1 beta' and 1 omega subunit. When a sigma factor is associated with the core the holoenzyme is formed, which can initiate transcription.

The catalysed reaction is RNA(n) + a ribonucleoside 5'-triphosphate = RNA(n+1) + diphosphate. Functionally, DNA-dependent RNA polymerase catalyzes the transcription of DNA into RNA using the four ribonucleoside triphosphates as substrates. In Pectobacterium atrosepticum (strain SCRI 1043 / ATCC BAA-672) (Erwinia carotovora subsp. atroseptica), this protein is DNA-directed RNA polymerase subunit beta.